Consider the following 84-residue polypeptide: Large ribosomal subunit protein bL27 (84 aa).

A disordered region spans residues 1–21; sequence MAHKKGGGSSKNGRDSQSKRL.

The protein belongs to the bacterial ribosomal protein bL27 family.

The protein is Large ribosomal subunit protein bL27 of Brachyspira hyodysenteriae (strain ATCC 49526 / WA1).